A 71-amino-acid chain; its full sequence is Small ribosomal subunit protein bS21 (71 aa).

The protein belongs to the bacterial ribosomal protein bS21 family.

This is Small ribosomal subunit protein bS21 from Buchnera aphidicola subsp. Schizaphis graminum (strain Sg).